The chain runs to 230 residues: Cytochrome b6-f complex iron-sulfur subunit, chloroplastic (230 aa).

The N-terminal 51 residues, 1 to 51 (MASFTLSSATPSQLCSSKNGMFAPSLALAKAGRVNVLISKERIRGMKLTCQ), are a transit peptide targeting the chloroplast. Residues 73–93 (LLGALSLPTGYMLLPYASFFV) form a helical membrane-spanning segment. A Rieske domain is found at 116-212 (AAEWLKTHAP…CDVDDGKVVF (97 aa)). [2Fe-2S] cluster-binding residues include cysteine 158, histidine 160, cysteine 176, and histidine 179. A disulfide bond links cysteine 163 and cysteine 178.

This sequence belongs to the Rieske iron-sulfur protein family. As to quaternary structure, the 4 large subunits of the cytochrome b6-f complex are cytochrome b6, subunit IV (17 kDa polypeptide, petD), cytochrome f and the Rieske protein, while the 4 small subunits are petG, petL, petM and petN. The complex functions as a dimer. The cofactor is [2Fe-2S] cluster.

It localises to the plastid. It is found in the chloroplast thylakoid membrane. The enzyme catalyses 2 oxidized [plastocyanin] + a plastoquinol + 2 H(+)(in) = 2 reduced [plastocyanin] + a plastoquinone + 4 H(+)(out). Functionally, component of the cytochrome b6-f complex, which mediates electron transfer between photosystem II (PSII) and photosystem I (PSI), cyclic electron flow around PSI, and state transitions. This chain is Cytochrome b6-f complex iron-sulfur subunit, chloroplastic (petC), found in Spinacia oleracea (Spinach).